The chain runs to 410 residues: Chaperone protein dnaJ 15 (410 aa).

Residues 17 to 82 (DPYEVLCVSK…EKRRHYDNAG (66 aa)) form the J domain. Positions 284-344 (AKTYEDTTEK…TVDELLKQRD (61 aa)) form a coiled coil. The interval 351–410 (SVVKTPSGNNLSNGSSSKAQGDESKGDGDSAGEEGGTENRDKSKRKWFNLNLKGSDKKLG) is disordered. The span at 357–367 (SGNNLSNGSSS) shows a compositional bias: low complexity.

This sequence belongs to the DnaJ family. B/II subfamily. In terms of tissue distribution, expressed at high levels in root cap, root tip meristematic region and elongation zones, and at lower levels in mature part of roots (at protein level). Constitutively expressed in seedlings, etiolated or not, roots, rosette leaves, cauline leaves, stems, flowers, siliques and pollen.

It localises to the cytoplasm. The protein resides in the cytoskeleton. The protein localises to the endoplasmic reticulum membrane. It is found in the golgi apparatus membrane. Functionally, plays a continuous role in plant development probably in the structural organization of compartments. Seems to be involved in early gravitropic signal transduction within the gravity-perceiving cells (statocytes), where it influences pH changes and auxin distribution. Probably affects the localization and/or activity of auxin efflux carrier components (PIN proteins) or other proteins involved in lateral auxin transport. The protein is Chaperone protein dnaJ 15 (ATJ15) of Arabidopsis thaliana (Mouse-ear cress).